The following is a 151-amino-acid chain: uncharacterized protein (151 aa).

Positions 1 to 24 (MHAKTKKLGTDTSYKRPQVTAQEQ) are disordered.

This is an uncharacterized protein from Acanthamoeba polyphaga mimivirus (APMV).